Here is a 559-residue protein sequence, read N- to C-terminus: MTQHTQTPSMPSPLWQYWRGLSGWNFYFLVKFGLLWAGYLNFHPLLNLVFMAFLLMPIPKYRLHRLRHWIAIPVGFALFWHDTWLPGPQSIMSQGTQVAEFSSGYLLDLIARFINWQMIGAIFVLLVAWLFLSQWIRVTVFVVAIMVWLNVLTLTGPVFTLWPAGQPTDTVTTTGGNAAATVATAGDKPVIGDMPAQTAPPTTANLNAWLNTFYAAEEKRKTTFPAQLPPDAQPFDLLVINICSLSWSDVEAAGLMSHPLWSHFDILFKHFNSGTSYSGPAAIRLLRASCGQPSHTRLYQPANNECYLFDNLAKLGFTQHLMMDHNGEFGGFLKEVRENGGMQSELMNQSGLPTALLSFDGSPVYDDLAVLNRWLTGEEREANSRSATFFNLLPLHDGNHFPGVSKTADYKIRAQKLFDELDAFFTELEKSGRKVMVVVVPEHGGALKGDRMQISGLRDIPSPSITNVPAGVKFFGMKAPHEGAPIDINQPSSYLAISELVVRAVDGKLFTEDSVNWNKLTSNLPQTAPVSENANAVVIQYQGKPYVRLNGGDWVPYPQ.

4 helical membrane passes run 34 to 54 (LLWA…MAFL), 68 to 88 (HWIA…LPGP), 113 to 133 (FINW…LFLS), and 139 to 159 (TVFV…GPVF).

Its subcellular location is the cell membrane. In terms of biological role, required for cellulose biosynthesis. The protein is Cellulose biosynthesis protein BcsG (bcsG) of Salmonella typhimurium (strain LT2 / SGSC1412 / ATCC 700720).